We begin with the raw amino-acid sequence, 454 residues long: Phosphoglucosamine mutase (454 aa).

Catalysis depends on serine 102, which acts as the Phosphoserine intermediate. Serine 102, aspartate 247, aspartate 249, and aspartate 251 together coordinate Mg(2+). Serine 102 bears the Phosphoserine mark.

Belongs to the phosphohexose mutase family. Mg(2+) is required as a cofactor. Post-translationally, activated by phosphorylation.

It catalyses the reaction alpha-D-glucosamine 1-phosphate = D-glucosamine 6-phosphate. Its function is as follows. Catalyzes the conversion of glucosamine-6-phosphate to glucosamine-1-phosphate. This Kineococcus radiotolerans (strain ATCC BAA-149 / DSM 14245 / SRS30216) protein is Phosphoglucosamine mutase.